We begin with the raw amino-acid sequence, 139 residues long: MVGLSRLTGGGLLLVLALLPLALDGKPLEEAPTAPSRIIPFSRPVRKESQAVLDPMVHPERPAGSGDDGDLSRLEGLAKEALGDGCFGLKLDRIGTSSGLGCNPKRPDPAPTALARIIPFSRPVRKESRAALDRMQHPG.

A signal peptide spans 1–25 (MVGLSRLTGGGLLLVLALLPLALDG). A propeptide spanning residues 26–75 (KPLEEAPTAPSRIIPFSRPVRKESQAVLDPMVHPERPAGSGDDGDLSRLE) is cleaved from the precursor. An intrachain disulfide couples Cys86 to Cys102. Residues 117-139 (IIPFSRPVRKESRAALDRMQHPG) constitute a propeptide that is removed on maturation.

This sequence belongs to the natriuretic peptide family. Expressed by the venom gland.

The protein localises to the secreted. In terms of biological role, natriuretic peptide that dose-dependently induces the rapid relaxation of rat aortic strips phenylephrine-precontracted. Acts by stimulating cGMP production in a dose-dependent manner (by probably activating NPR1 and/or NPR2). May also show potent hypotensive effects. In Micrurus fulvius (Eastern coral snake), this protein is Natriuretic peptide Mf-NP.